A 156-amino-acid chain; its full sequence is Type II secretion system core protein G (156 aa).

The propeptide at 1–22 is leader sequence; sequence MQQSQRGCGQNSYGQSGYRQRG. Position 23 is an N-methylphenylalanine (Phe-23). The helical transmembrane segment at 23-43 threads the bilayer; it reads FTLLEIMVVIVILGVLASLVV.

Belongs to the GSP G family. In terms of assembly, type II secretion system is composed of four main components: the outer membrane complex, the inner membrane complex, the cytoplasmic secretion ATPase and the periplasm-spanning pseudopilus. Forms homomultimers. In terms of processing, cleaved by the prepilin peptidase. Post-translationally, methylated by prepilin peptidase at the amino group of the N-terminal phenylalanine once the leader sequence is cleaved.

It is found in the cell inner membrane. Core component of the type II secretion system required for the energy-dependent secretion of extracellular factors such as proteases and toxins from the periplasm. Pseudopilin (pilin-like) protein that polymerizes to form the pseudopilus. Further polymerization triggers pseudopilus growth. This chain is Type II secretion system core protein G (outG), found in Pectobacterium carotovorum subsp. carotovorum (Erwinia carotovora subsp. carotovora).